The following is a 356-amino-acid chain: MPRIEFEPKLDFKDVLLRPKRSTLRSRAEVDLMREYVFRNSKKTYVGVPVVASNMDTVGTFEMAEVLAKFSLFTTIHKHYQVDEWKAFVQRVDSNPQIMSQIGISSGISTSDFDKLRTVCDMIPELEYICLDVANGYSEVFVDFIRRVREQFPTHTIFAGNVVTGEMVEELILSGADVVKVGIGPGSVCTTRKKAGVGYPQLSAVLECADASHGLNGHVMSDGGCTNPGDVAKAFGGGADFVMIGGLLAGHDQCGGEVVEKDGKKYKLFYGMSSDTAMKKYQGSVAEYRASEGKTIYMPYRGDVSRTIHDLLGGLRSACTYIGATKLKELSKRATFVRVTQQTNDQYSAYEVPRID.

NADP(+)-binding positions include 26–27, Lys-78, 132–134, and 183–184; these read SR, DVA, and IG. Gly-184, Gly-186, and Cys-189 together coordinate K(+). The active-site Thioimidate intermediate is the Cys-189. Thr-191 (proton donor/acceptor) is an active-site residue. Arg-192 provides a ligand contact to K(+). Residues 222 to 224, 245 to 246, 271 to 273, and 289 to 293 each bind GMP; these read DGG, GG, GMS, and RASEG. NADP(+)-binding positions include Met-272, 288–289, and 317–320; these read YR and SACT.

It belongs to the IMPDH/GMPR family.

The enzyme catalyses IMP + NH4(+) + NADP(+) = GMP + NADPH + 2 H(+). Catalyzes the irreversible NADPH-dependent deamination of GMP to IMP. It functions in the conversion of nucleobase, nucleoside and nucleotide derivatives of G to A nucleotides, and in maintaining the intracellular balance of A and G nucleotides. This Ascaris suum (Pig roundworm) protein is GMP reductase.